Consider the following 753-residue polypeptide: Nuclear hormone receptor family member daf-12 (753 aa).

Positions 1–109 (MGTNGGVIAE…PDDGLLDSSE (109 aa)) are disordered. Positions 20–29 (NPDKVEEPVV) are enriched in basic and acidic residues. The segment covering 30 to 44 (RRKRVTRRRHRRIHS) has biased composition (basic residues). A DNA-binding region (nuclear receptor) is located at residues 115-190 (QKTCRVCGDH…VGMKKEWILN (76 aa)). 2 NR C4-type zinc fingers span residues 118 to 138 (CRVC…CESC) and 154 to 173 (CPYS…CQKC). The Nuclear localization signal signature appears at 191 to 206 (EEQLRRRKNSRLNNTG). Disordered stretches follow at residues 198 to 251 (KNSR…TINP), 266 to 314 (NAMP…GYDP), and 376 to 410 (GHPM…EKNH). The segment covering 201–211 (RLNNTGTCNKR) has biased composition (polar residues). Residues 212 to 227 (SQPGNQQSPQGPNQQP) show a composition bias toward low complexity. Composition is skewed to polar residues over residues 285–301 (PVGS…SLTM) and 394–410 (MSLS…EKNH). In terms of domain architecture, NR LBD spans 516 to 753 (AELKALDAVR…ELPGEFFKIK (238 aa)).

This sequence belongs to the nuclear hormone receptor family. In terms of assembly, interacts with din-1 isoform d. In terms of tissue distribution, expressed throughout muscles of the pharynx. Expressed in epidermal seam cells, the vulva, head neurons, mature spermatheca, uterus and intestine.

Its subcellular location is the nucleus. Its function is as follows. Nuclear receptor which binds directly to response elements in target gene promoters. Activity is modulated by binding of steroid hormone ligands that include dafachronic acids. Regulates expression of genes involved in postembryonic development and the dauer diapause, in response to environmental cues. Inhibits the expression of let-7 family members when bound to corepressor din-1s which is an isoform of din-1. Plays a role in controlling the timing of seam cell development during the larval stages. Has a role in the immune response to bacterial infection, via regulation of let-7 miRNAs. Controls expression of genes that promote the aerobic catabolism of fatty acids for reproductive growth. May be involved in thermotolerance. The polypeptide is Nuclear hormone receptor family member daf-12 (Caenorhabditis elegans).